The primary structure comprises 315 residues: Nucleotide-binding protein PsycPRwf_2129 (315 aa).

An ATP-binding site is contributed by 29–36 (GRSGSGKT). Residue 79–82 (DIRT) coordinates GTP.

The protein belongs to the RapZ-like family.

In terms of biological role, displays ATPase and GTPase activities. This Psychrobacter sp. (strain PRwf-1) protein is Nucleotide-binding protein PsycPRwf_2129.